Here is a 293-residue protein sequence, read N- to C-terminus: Ribonuclease H2 subunit B (293 aa).

The tract at residues 251-278 (KRPQNSDITSSLLKKPNRKQATKKSKYF) is disordered. Residues 265–276 (KPNRKQATKKSK) are compositionally biased toward basic residues.

Belongs to the RNase H2 subunit B family. Component of the RNase H2 complex.

The protein resides in the nucleus. It localises to the cytoplasm. Non catalytic subunit of RNase H2, an endonuclease that specifically degrades the RNA of RNA:DNA hybrids. Participates in DNA replication, possibly by mediating the removal of lagging-strand Okazaki fragment RNA primers during DNA replication. Mediates the excision of single ribonucleotides from DNA:RNA duplexes. This is Ribonuclease H2 subunit B (rnh202) from Schizosaccharomyces pombe (strain 972 / ATCC 24843) (Fission yeast).